The following is a 656-amino-acid chain: 1-deoxy-D-xylulose-5-phosphate synthase 1 (656 aa).

Thiamine diphosphate is bound by residues His73 and 113–115 (SHA). Asp144 lines the Mg(2+) pocket. Thiamine diphosphate contacts are provided by residues 145 to 146 (GA), Asn174, Tyr285, and Glu367. Asn174 is a binding site for Mg(2+). Residues 625–656 (AGDRAGGPAVEQPGDGRMSGDGRIVMPAQGEN) are disordered.

The protein belongs to the transketolase family. DXPS subfamily. In terms of assembly, homodimer. Mg(2+) serves as cofactor. It depends on thiamine diphosphate as a cofactor.

The catalysed reaction is D-glyceraldehyde 3-phosphate + pyruvate + H(+) = 1-deoxy-D-xylulose 5-phosphate + CO2. Its pathway is metabolic intermediate biosynthesis; 1-deoxy-D-xylulose 5-phosphate biosynthesis; 1-deoxy-D-xylulose 5-phosphate from D-glyceraldehyde 3-phosphate and pyruvate: step 1/1. Its function is as follows. Catalyzes the acyloin condensation reaction between C atoms 2 and 3 of pyruvate and glyceraldehyde 3-phosphate to yield 1-deoxy-D-xylulose-5-phosphate (DXP). This chain is 1-deoxy-D-xylulose-5-phosphate synthase 1, found in Streptomyces coelicolor (strain ATCC BAA-471 / A3(2) / M145).